We begin with the raw amino-acid sequence, 71 residues long: Antitoxin VapB22 (71 aa).

Belongs to the phD/YefM antitoxin family.

Its function is as follows. Antitoxin component of a type II toxin-antitoxin (TA) system. Upon expression in M.smegmatis neutralizes the effect of cognate toxin VapC22. The chain is Antitoxin VapB22 (vapB22) from Mycobacterium tuberculosis (strain ATCC 25618 / H37Rv).